A 705-amino-acid chain; its full sequence is Elongation factor G (705 aa).

One can recognise a tr-type G domain in the interval Glu-8 to Ala-290. Residues Ala-17–Thr-24, Asp-88–His-92, and Asn-142–Asp-145 contribute to the GTP site. The interval Ala-290–Ala-309 is disordered.

This sequence belongs to the TRAFAC class translation factor GTPase superfamily. Classic translation factor GTPase family. EF-G/EF-2 subfamily.

Its subcellular location is the cytoplasm. Catalyzes the GTP-dependent ribosomal translocation step during translation elongation. During this step, the ribosome changes from the pre-translocational (PRE) to the post-translocational (POST) state as the newly formed A-site-bound peptidyl-tRNA and P-site-bound deacylated tRNA move to the P and E sites, respectively. Catalyzes the coordinated movement of the two tRNA molecules, the mRNA and conformational changes in the ribosome. The protein is Elongation factor G of Xanthomonas axonopodis pv. citri (strain 306).